The chain runs to 190 residues: Small ribosomal subunit protein uS7 (190 aa).

Residue Thr2 is modified to N-acetylthreonine.

It belongs to the universal ribosomal protein uS7 family. As to quaternary structure, component of the small ribosomal subunit. Part of the small subunit (SSU) processome, composed of more than 70 proteins and the RNA chaperone small nucleolar RNA (snoRNA) U3.

The protein localises to the cytoplasm. It localises to the nucleus. Its subcellular location is the nucleolus. Functionally, component of the small ribosomal subunit. The ribosome is a large ribonucleoprotein complex responsible for the synthesis of proteins in the cell. Part of the small subunit (SSU) processome, first precursor of the small eukaryotic ribosomal subunit. During the assembly of the SSU processome in the nucleolus, many ribosome biogenesis factors, an RNA chaperone and ribosomal proteins associate with the nascent pre-rRNA and work in concert to generate RNA folding, modifications, rearrangements and cleavage as well as targeted degradation of pre-ribosomal RNA by the RNA exosome. The polypeptide is Small ribosomal subunit protein uS7 (rps5) (Dictyostelium discoideum (Social amoeba)).